The following is a 203-amino-acid chain: Thymidylate kinase (203 aa).

ATP is bound at residue 10–17 (GIDGSGKS).

Belongs to the thymidylate kinase family.

The enzyme catalyses dTMP + ATP = dTDP + ADP. Functionally, phosphorylation of dTMP to form dTDP in both de novo and salvage pathways of dTTP synthesis. This Brachyspira hyodysenteriae (strain ATCC 49526 / WA1) protein is Thymidylate kinase.